A 223-amino-acid polypeptide reads, in one-letter code: Urease accessory protein UreF (223 aa).

This sequence belongs to the UreF family. UreD, UreF and UreG form a complex that acts as a GTP-hydrolysis-dependent molecular chaperone, activating the urease apoprotein by helping to assemble the nickel containing metallocenter of UreC. The UreE protein probably delivers the nickel.

The protein localises to the cytoplasm. Functionally, required for maturation of urease via the functional incorporation of the urease nickel metallocenter. The polypeptide is Urease accessory protein UreF (Sinorhizobium medicae (strain WSM419) (Ensifer medicae)).